The chain runs to 1197 residues: MKNWTTEQQAAIDARGSNLLISAAAGSGKTAVLVERIIQIILKDKIDIDRLLIVTFTNAAAGEMRERIAGAIMEEMERKTEQEAHLRRQINLLNRASITTIHSFCIDVVRRHFHIIDVDPGFRIGDITETSIMRLEALEELFEEEYQGAHETFFRLVEAFGGTKEDRPLQDLVLKVYGFIQSQPYPEVWLKEKVGDFSLSIEDFDESLWIKTIKSRIEIQLKGAMDLLNNALSIAQEPGGPEVYEEAILSDLGQISELYDSLTLPITSFYEHLNHINHARLKPSKESDPVLKEESKNLRDKAKGIIKDIKDNIFTVSPEAYVEDLNKLHPLMDYLYQLVTGFTSRYAQKKADRGIVDFNDLEHYGLEILANELVAQEYQQRFEYIFVDEYQDSNIVQETLIQSIKRKDNLFMVGDVKQSIYRFRLADPSLFIEKYETFGEKEGDINRRIDLAKNFRSRGEVLAGVNYLFKYIMSKELGEIGYDHRAALYQGASFESIKEPSIEVNLIEKNMEIDEDIEEELQELADIEVEARIIAKRIKDLLNEEIYDEKNEVYRRLEFKDIVVLLRTTKNWAQSFLEAFIREGIPAYADANTGYFEAIEVGMFLNLLKVIDNKRQDIPLISVMRSPIGEFTTAELIDIRINDKNGTYYDAIEKYIEKNEDALKDKLVSFIEKLNKWGNEARYIKIDQFIWKLLMDTGFYYYVGAMPGGLQRQANLRILFDRASQFEKTSIKGLFNFIKFIEKLQGSKGDMGAAKILGENDNVVRIMSIHKSKGLEFPVVIAAGMGKNFNLRDTSADVLLHKDLGLGPKFVDSNLRTYRDSIAKLAMKDQIKIESLSEEMRILYVAFTRPKDKLIIVGSLRKIDRLVTNWNQADNIYSLMNAKSYLDWIGAALIKHPHGEVLRELGDFEFNELKYKAEDSKWTVNILGRQAVVLEEHEKRLKEEEYKEKLTHFNREDFSPHRHTEHKEEIDNRLNWQYPYPQATVIPSKLSVSDIKKANMGEMDSIVHQIPTLVKTPKFMEGKKALTAAERGTIIHFVLQHLALNQVGSEEEISQQIDLMVARELITEEEAQVVNVGKIVNYFKSEIGKRMLGAEKVYRESPFIIEKSAKDVIHGLSENLEEKLLVQGVIDCYFEEMDGLVLVDYKNDIVLNGDTASIMTRYDVQLMMYAEALERITGKQVKETYLYLFDVDQGVKR.

Residues 2–458 form the UvrD-like helicase ATP-binding domain; it reads KNWTTEQQAA…IDLAKNFRSR (457 aa). 23–30 contributes to the ATP binding site; that stretch reads AAAGSGKT. The region spanning 485–774 is the UvrD-like helicase C-terminal domain; the sequence is RAALYQGASF…RIMSIHKSKG (290 aa).

The protein belongs to the helicase family. AddA subfamily. In terms of assembly, heterodimer of AddA and AddB/RexB. Requires Mg(2+) as cofactor.

The enzyme catalyses Couples ATP hydrolysis with the unwinding of duplex DNA by translocating in the 3'-5' direction.. It catalyses the reaction ATP + H2O = ADP + phosphate + H(+). Functionally, the heterodimer acts as both an ATP-dependent DNA helicase and an ATP-dependent, dual-direction single-stranded exonuclease. Recognizes the chi site generating a DNA molecule suitable for the initiation of homologous recombination. The AddA nuclease domain is required for chi fragment generation; this subunit has the helicase and 3' -&gt; 5' nuclease activities. In Alkaliphilus metalliredigens (strain QYMF), this protein is ATP-dependent helicase/nuclease subunit A.